The sequence spans 514 residues: Putative fucosyltransferase 10 (514 aa).

N-linked (GlcNAc...) asparagine glycosylation is found at N185, N210, N355, N377, and N456.

The protein belongs to the glycosyltransferase 37 family. Expressed in root, leaves, stems and seedlings.

It is found in the golgi apparatus. It participates in protein modification; protein glycosylation. Its function is as follows. May be involved in cell wall biosynthesis. May act as a fucosyltransferase. This is Putative fucosyltransferase 10 (FUT10) from Arabidopsis thaliana (Mouse-ear cress).